The primary structure comprises 527 residues: Arginine--tRNA ligase (527 aa).

The 'HIGH' region motif lies at 111–121 (ANPTGPLHIGH).

This sequence belongs to the class-I aminoacyl-tRNA synthetase family. Monomer.

The protein localises to the cytoplasm. It carries out the reaction tRNA(Arg) + L-arginine + ATP = L-arginyl-tRNA(Arg) + AMP + diphosphate. The chain is Arginine--tRNA ligase from Campylobacter concisus (strain 13826).